The primary structure comprises 127 residues: uncharacterized protein (127 aa).

2 consecutive transmembrane segments (helical) span residues 42-62 (LLIS…IAFI) and 78-98 (GLPI…YYFL).

It localises to the membrane. This is an uncharacterized protein from Schizosaccharomyces pombe (strain 972 / ATCC 24843) (Fission yeast).